The sequence spans 398 residues: Protein trichome birefringence-like 45 (398 aa).

The chain crosses the membrane as a helical; Signal-anchor for type II membrane protein span at residues 1 to 21 (MAAVQCLTFLFLFLLQNATSA). Residues 131–133 (GDS) carry the GDS motif motif. Residues 375 to 389 (DCSHWCLPGLPDTWN) carry the DCXHWCLPGXXDXWN motif motif.

This sequence belongs to the PC-esterase family. TBL subfamily.

It localises to the membrane. Its function is as follows. May act as a bridging protein that binds pectin and other cell wall polysaccharides. Probably involved in maintaining esterification of pectins. May be involved in the specific O-acetylation of cell wall polymers. The chain is Protein trichome birefringence-like 45 (TBL45) from Arabidopsis thaliana (Mouse-ear cress).